A 324-amino-acid chain; its full sequence is MSLYMLVSTFAVAFIITVIGVPLFIPFLVKLKFGQSIRDEGPKMHEKKSGTPTMGAVIFITAMLISFLIFSFISGEVSAATWLLFITLALFGALGFLDDYIKVVQKRNLGLTSKQKFLGQVAISILFYLVYHFSDFAETLKIPFTNTEIDLGWFFIIFILFWLVGFSNAVNLTDGLDGLVSGLSVIAFSAFGVIAFYQEQMDVAIFCFAIVGGMLGFLLFNKNPAKIFMGDTGSLALGGSIAAVSILVHQEWLLLLIGIIFVIETASVILQVFYFKATGGKRIFRMTPIHHHFELGGWSEWRVVLTFWGIGLIGAIISVCVVIF.

Helical transmembrane passes span 9–29, 53–73, 77–97, 117–137, 149–169, 176–196, 201–221, 227–247, 253–273, and 304–324; these read TFAV…PFLV, TMGA…FSFI, VSAA…LGFL, FLGQ…SDFA, IDLG…FSNA, LDGL…VIAF, MDVA…LLFN, IFMG…VSIL, LLLL…LQVF, and VLTF…VVIF.

Belongs to the glycosyltransferase 4 family. MraY subfamily. It depends on Mg(2+) as a cofactor.

It localises to the cell membrane. It catalyses the reaction UDP-N-acetyl-alpha-D-muramoyl-L-alanyl-gamma-D-glutamyl-meso-2,6-diaminopimeloyl-D-alanyl-D-alanine + di-trans,octa-cis-undecaprenyl phosphate = di-trans,octa-cis-undecaprenyl diphospho-N-acetyl-alpha-D-muramoyl-L-alanyl-D-glutamyl-meso-2,6-diaminopimeloyl-D-alanyl-D-alanine + UMP. The protein operates within cell wall biogenesis; peptidoglycan biosynthesis. In terms of biological role, catalyzes the initial step of the lipid cycle reactions in the biosynthesis of the cell wall peptidoglycan: transfers peptidoglycan precursor phospho-MurNAc-pentapeptide from UDP-MurNAc-pentapeptide onto the lipid carrier undecaprenyl phosphate, yielding undecaprenyl-pyrophosphoryl-MurNAc-pentapeptide, known as lipid I. The chain is Phospho-N-acetylmuramoyl-pentapeptide-transferase from Listeria innocua serovar 6a (strain ATCC BAA-680 / CLIP 11262).